The sequence spans 226 residues: Thymidylate kinase (226 aa).

ATP is bound at residue 20-27 (GGEGAGKS).

Belongs to the thymidylate kinase family.

It carries out the reaction dTMP + ATP = dTDP + ADP. In terms of biological role, phosphorylation of dTMP to form dTDP in both de novo and salvage pathways of dTTP synthesis. This is Thymidylate kinase from Bradyrhizobium sp. (strain ORS 278).